A 161-amino-acid polypeptide reads, in one-letter code: Negative cofactor 2 complex subunit beta (161 aa).

The region spanning 11 to 75 is the Histone-fold domain; that stretch reads SLPKATVQKM…IAAEHIIKAL (65 aa). The span at 93–107 shows a compositional bias: basic and acidic residues; it reads EHKEQQKNREKKSSK. Disordered regions lie at residues 93–116 and 130–161; these read EHKE…VSRD and RERF…TKEN. The segment covering 135-147 has biased composition (polar residues); it reads NQNIAHDNHTTTA.

This sequence belongs to the NC2 beta/DR1 family.

Its subcellular location is the cytoplasm. The protein resides in the nucleus. The protein is Negative cofactor 2 complex subunit beta (ncb2) of Schizosaccharomyces pombe (strain 972 / ATCC 24843) (Fission yeast).